Consider the following 2579-residue polypeptide: Ectopic P granules protein 5 homolog (2579 aa).

Disordered stretches follow at residues 1 to 46 (MAEA…SREQ) and 92 to 132 (NEES…GTKV). Residues 7–23 (PQRRAKAKASRTKTKEK) are compositionally biased toward basic residues. Residues 24–34 (KKYETPQREES) show a composition bias toward basic and acidic residues. Threonine 134 bears the Phosphothreonine mark. The tract at residues 535 to 564 (PSERKPSSSGPGSGTWTLVDEGGEEDEDPE) is disordered. Positions 555–564 (EGGEEDEDPE) are enriched in acidic residues. The stretch at 1607-1633 (MHKNEAISQQLHVLRKEVKQLQAEAAK) forms a coiled coil.

It belongs to the EPG5 family. As to quaternary structure, interacts with RAN.

The protein localises to the cytoplasm. It localises to the perinuclear region. Its subcellular location is the lysosome. Functionally, involved in autophagy. May play a role in a late step of autophagy, such as clearance of autophagosomal cargo. Plays a key role in innate and adaptive immune response triggered by unmethylated cytidine-phosphate-guanosine (CpG) dinucleotides from pathogens, and mediated by the nucleotide-sensing receptor TLR9. It is necessary for the translocation of CpG dinucleotides from early endosomes to late endosomes and lysosomes, where TLR9 is located. The sequence is that of Ectopic P granules protein 5 homolog (EPG5) from Homo sapiens (Human).